A 153-amino-acid chain; its full sequence is MVATLFIDADACPVKDEAYKVAARHGYKTFVVSNSWIRVPATPVIEQIVVDAGPDVADDWIAERCGPGDVVVTNDIPLADRVLKAGGAAVAPNGRVFSHDMIGSALASRSIGEHLRSMGEVTKGPAAFANADRSRFLQALDQLVVKAKRAAPR.

The protein belongs to the UPF0178 family.

The polypeptide is UPF0178 protein CC_1215 (Caulobacter vibrioides (strain ATCC 19089 / CIP 103742 / CB 15) (Caulobacter crescentus)).